We begin with the raw amino-acid sequence, 556 residues long: Glucomannan 4-beta-mannosyltransferase 7 (556 aa).

The chain crosses the membrane as a helical span at residues 58–78; sequence VVVPVFKFLVLLCLVMSVMFF. The active site involves D158. The substrate site is built by D217 and D219. The active site involves D311. The next 4 helical transmembrane spans lie at 390-410, 426-448, 502-522, and 526-546; these read IVAH…TVLF, LITL…WVLF, LLEL…IVYG, and LYVY…GFVG.

The protein belongs to the glycosyltransferase 2 family. Plant cellulose synthase-like A subfamily. Ubiquitous.

The protein localises to the golgi apparatus membrane. The catalysed reaction is GDP-mannose + (glucomannan)n = GDP + (glucomannan)n+1.. In terms of biological role, probable mannan synthase which consists of a 4-beta-mannosyltransferase activity on mannan using GDP-mannose. The beta-1,4-mannan product is the backbone for galactomannan synthesis by galactomannan galactosyltransferase. Galactomannan is a noncellulosic polysaccharides of plant cell wall. Required for synthesis of a cell wall polysaccharide essential for pollen tube growth, for cell wall structure, or for signaling during plant embryo development. The sequence is that of Glucomannan 4-beta-mannosyltransferase 7 from Arabidopsis thaliana (Mouse-ear cress).